The chain runs to 223 residues: SCMKAAPMKEVSLRGQGNLAYPGLRTQANLENLGGPNDATRGLTSLADTFEQVIEELLDEQQAIQPSKENKDADLYSSRVMLSSQVPLEPPLLFLLEEYKNYLDAANMSMRVRRHSDPARRGELSVCESTSEWVTAAEKKTAVDMSGATVTVLEKVPVPKGQLKQYFYETKCSSKGYTKEGCRGIDKRYWNSQCRTTQSYVRALTMDNKKRVGWRFIRIDTSC.

The N-terminal stretch at 1–5 is a signal peptide; sequence SCMKA. The propeptide occupies 6–114; the sequence is APMKEVSLRG…AANMSMRVRR (109 aa). N-linked (GlcNAc...) asparagine glycosylation occurs at Asn107. 2 disulfides stabilise this stretch: Cys127–Cys194 and Cys172–Cys223.

It belongs to the NGF-beta family.

Its subcellular location is the secreted. Functionally, promotes the survival of neuronal populations that are all located either in the central nervous system or directly connected to it. The polypeptide is Neurotrophic factor BDNF precursor form (BDNF) (Ramphotyphlops sp. (strain YPM 13663) (Blind snake)).